The primary structure comprises 455 residues: Acid sphingomyelinase-like phosphodiesterase 3b (455 aa).

Positions 1 to 18 (MRLLAWLIFLANWGGARA) are cleaved as a signal peptide. Zn(2+)-binding residues include D28 and H30. A disulfide bridge connects residues C45 and C64. N72 carries an N-linked (GlcNAc...) asparagine glycan. Residues D93 and N134 each coordinate Zn(2+). N164 is a glycosylation site (N-linked (GlcNAc...) asparagine). 3 residues coordinate Zn(2+): H236, H277, and H279. N343 carries an N-linked (GlcNAc...) asparagine glycan. Disulfide bonds link C405-C409 and C415-C428.

It belongs to the acid sphingomyelinase family. In terms of assembly, interacts with TLR4, TLR7, TLR8 and TLR9. The cofactor is Zn(2+). N-glycosylated.

It localises to the secreted. Its subcellular location is the cell membrane. Its function is as follows. Lipid-modulating phosphodiesterase. Active on the surface of macrophages and dendritic cells and strongly influences macrophage lipid composition and membrane fluidity. Acts as a negative regulator of Toll-like receptor signaling. Has in vitro phosphodiesterase activity, but the physiological substrate is unknown. Lacks activity with phosphocholine-containing lipids, but can cleave CDP-choline, and can release phosphate from ATP and ADP (in vitro). In Homo sapiens (Human), this protein is Acid sphingomyelinase-like phosphodiesterase 3b (SMPDL3B).